A 119-amino-acid chain; its full sequence is Large ribosomal subunit protein bL17 (119 aa).

Belongs to the bacterial ribosomal protein bL17 family. Part of the 50S ribosomal subunit. Contacts protein L32.

This is Large ribosomal subunit protein bL17 from Malacoplasma penetrans (strain HF-2) (Mycoplasma penetrans).